Here is a 197-residue protein sequence, read N- to C-terminus: Glycerol-3-phosphate acyltransferase (197 aa).

5 helical membrane-spanning segments follow: residues 6–26 (LFIV…AIIV), 58–78 (AITL…AHYL), 82–102 (MLNV…PIFF), 116–136 (ALLA…VFVA), and 157–177 (FYLI…CLWI).

This sequence belongs to the PlsY family. Probably interacts with PlsX.

The protein resides in the cell inner membrane. It carries out the reaction an acyl phosphate + sn-glycerol 3-phosphate = a 1-acyl-sn-glycero-3-phosphate + phosphate. It participates in lipid metabolism; phospholipid metabolism. In terms of biological role, catalyzes the transfer of an acyl group from acyl-phosphate (acyl-PO(4)) to glycerol-3-phosphate (G3P) to form lysophosphatidic acid (LPA). This enzyme utilizes acyl-phosphate as fatty acyl donor, but not acyl-CoA or acyl-ACP. The polypeptide is Glycerol-3-phosphate acyltransferase (Ruthia magnifica subsp. Calyptogena magnifica).